Consider the following 72-residue polypeptide: uncharacterized protein (72 aa).

Residues 11 to 31 (WCCTVLSAFGVVILSVIAHLF) form a helical membrane-spanning segment.

The protein localises to the membrane. This is an uncharacterized protein from Saccharomyces cerevisiae (strain ATCC 204508 / S288c) (Baker's yeast).